The chain runs to 177 residues: Large ribosomal subunit protein uL6 (177 aa).

This sequence belongs to the universal ribosomal protein uL6 family. Part of the 50S ribosomal subunit.

Functionally, this protein binds to the 23S rRNA, and is important in its secondary structure. It is located near the subunit interface in the base of the L7/L12 stalk, and near the tRNA binding site of the peptidyltransferase center. This Pasteurella multocida (strain Pm70) protein is Large ribosomal subunit protein uL6.